The sequence spans 304 residues: L-lactate dehydrogenase (304 aa).

NAD(+) contacts are provided by residues valine 11, aspartate 32, arginine 37, and 76-77 (GA). Substrate contacts are provided by residues glutamine 79, arginine 85, and 117 to 120 (NPVD). Residue serine 138 participates in NAD(+) binding. 143-146 (DSAR) lines the substrate pocket. Beta-D-fructose 1,6-bisphosphate contacts are provided by arginine 148 and histidine 163. Histidine 170 acts as the Proton acceptor in catalysis. A substrate-binding site is contributed by threonine 225.

This sequence belongs to the LDH/MDH superfamily. LDH family. As to quaternary structure, homotetramer.

The protein localises to the cytoplasm. It carries out the reaction (S)-lactate + NAD(+) = pyruvate + NADH + H(+). It functions in the pathway fermentation; pyruvate fermentation to lactate; (S)-lactate from pyruvate: step 1/1. Allosterically activated by fructose 1,6-bisphosphate (FBP). In terms of biological role, catalyzes the conversion of lactate to pyruvate. The sequence is that of L-lactate dehydrogenase from Deinococcus radiodurans (strain ATCC 13939 / DSM 20539 / JCM 16871 / CCUG 27074 / LMG 4051 / NBRC 15346 / NCIMB 9279 / VKM B-1422 / R1).